Here is a 1372-residue protein sequence, read N- to C-terminus: DNA-directed RNA polymerase subunit beta' (1372 aa).

C69, C71, C84, and C87 together coordinate Zn(2+). Mg(2+) contacts are provided by D460, D462, and D464. Zn(2+) is bound by residues C808, C882, C889, and C892.

The protein belongs to the RNA polymerase beta' chain family. The RNAP catalytic core consists of 2 alpha, 1 beta, 1 beta' and 1 omega subunit. When a sigma factor is associated with the core the holoenzyme is formed, which can initiate transcription. Requires Mg(2+) as cofactor. Zn(2+) serves as cofactor.

It catalyses the reaction RNA(n) + a ribonucleoside 5'-triphosphate = RNA(n+1) + diphosphate. DNA-dependent RNA polymerase catalyzes the transcription of DNA into RNA using the four ribonucleoside triphosphates as substrates. This is DNA-directed RNA polymerase subunit beta' from Rickettsia felis (strain ATCC VR-1525 / URRWXCal2) (Rickettsia azadi).